Consider the following 512-residue polypeptide: Probable capsid protein 4 (512 aa).

Belongs to the NCLDV major capsid protein family.

The protein resides in the virion. The sequence is that of Probable capsid protein 4 from Acanthamoeba polyphaga mimivirus (APMV).